A 355-amino-acid polypeptide reads, in one-letter code: Erythronate-4-phosphate dehydrogenase (355 aa).

Substrate contacts are provided by serine 45 and threonine 66. An NAD(+)-binding site is contributed by aspartate 146. Arginine 206 is an active-site residue. Aspartate 229 contributes to the NAD(+) binding site. The active site involves glutamate 234. Catalysis depends on histidine 251, which acts as the Proton donor. Glycine 254 contributes to the NAD(+) binding site. Tyrosine 255 contributes to the substrate binding site.

This sequence belongs to the D-isomer specific 2-hydroxyacid dehydrogenase family. PdxB subfamily. As to quaternary structure, homodimer.

It is found in the cytoplasm. The catalysed reaction is 4-phospho-D-erythronate + NAD(+) = (R)-3-hydroxy-2-oxo-4-phosphooxybutanoate + NADH + H(+). It participates in cofactor biosynthesis; pyridoxine 5'-phosphate biosynthesis; pyridoxine 5'-phosphate from D-erythrose 4-phosphate: step 2/5. Functionally, catalyzes the oxidation of erythronate-4-phosphate to 3-hydroxy-2-oxo-4-phosphonooxybutanoate. This Acinetobacter baumannii (strain SDF) protein is Erythronate-4-phosphate dehydrogenase.